Reading from the N-terminus, the 115-residue chain is UPF0102 protein NMB2089 (115 aa).

The protein belongs to the UPF0102 family.

This Neisseria meningitidis serogroup B (strain ATCC BAA-335 / MC58) protein is UPF0102 protein NMB2089.